The primary structure comprises 190 residues: uncharacterized protein (190 aa).

The N-terminal stretch at 1–15 (MKVFAYIALATVVAG) is a signal peptide.

It is found in the secreted. This is an uncharacterized protein from Arthroderma benhamiae (strain ATCC MYA-4681 / CBS 112371) (Trichophyton mentagrophytes).